The sequence spans 113 residues: Retrotransposon Gag-like protein 8B (113 aa).

This sequence belongs to the FAM127 family.

The chain is Retrotransposon Gag-like protein 8B (RTL8B) from Homo sapiens (Human).